Reading from the N-terminus, the 458-residue chain is ATP synthase subunit beta 2 (458 aa).

Residue 148-155 coordinates ATP; sequence GGAGVGKT.

This sequence belongs to the ATPase alpha/beta chains family. As to quaternary structure, F-type ATPases have 2 components, CF(1) - the catalytic core - and CF(0) - the membrane proton channel. CF(1) has five subunits: alpha(3), beta(3), gamma(1), delta(1), epsilon(1). CF(0) has three main subunits: a(1), b(2) and c(9-12). The alpha and beta chains form an alternating ring which encloses part of the gamma chain. CF(1) is attached to CF(0) by a central stalk formed by the gamma and epsilon chains, while a peripheral stalk is formed by the delta and b chains.

It is found in the cell inner membrane. It carries out the reaction ATP + H2O + 4 H(+)(in) = ADP + phosphate + 5 H(+)(out). Its function is as follows. Produces ATP from ADP in the presence of a proton gradient across the membrane. The catalytic sites are hosted primarily by the beta subunits. This Marinomonas sp. (strain MWYL1) protein is ATP synthase subunit beta 2.